The following is a 193-amino-acid chain: MAKKQSILSPIIRITFTFLVLCGLVYPLIVTGIAQAVMKDNADGSLIYNDKNEVIGSKLIGQNFTDPRYFHGRVSSIEYKAEASGSNNYAPSNPDLEKRVEKSIEEWKKQNPTVPVTEVPIDLVTNSGSGLDPDISPKAASVQVERISKITNIPKETLNQLIKDQTEGAALGLFGETRVNVLKLNLELQKLLK.

A helical transmembrane segment spans residues 14–34; it reads ITFTFLVLCGLVYPLIVTGIA.

Belongs to the KdpC family. As to quaternary structure, the system is composed of three essential subunits: KdpA, KdpB and KdpC.

The protein resides in the cell membrane. Part of the high-affinity ATP-driven potassium transport (or Kdp) system, which catalyzes the hydrolysis of ATP coupled with the electrogenic transport of potassium into the cytoplasm. This subunit acts as a catalytic chaperone that increases the ATP-binding affinity of the ATP-hydrolyzing subunit KdpB by the formation of a transient KdpB/KdpC/ATP ternary complex. This is Potassium-transporting ATPase KdpC subunit from Bacillus cereus (strain ATCC 10987 / NRS 248).